Here is a 173-residue protein sequence, read N- to C-terminus: Protein SHI RELATED SEQUENCE 8 (173 aa).

Zn(2+) is bound by residues C52, C63, C68, C72, and C79. The segment at residues 52–79 is a DNA-binding region (zn(2)-C6 fungal-type; degenerate); that stretch reads CQDFGNQAKKDCSHMRCRTCCKSRGFEC. The segment covering 100–110 has biased composition (low complexity); that stretch reads LATVQPQTQLP. The interval 100–121 is disordered; the sequence is LATVQPQTQLPRGESVPKRHRE.

Belongs to the SHI protein family.

The protein resides in the nucleus. Its function is as follows. Transcription activator that binds DNA on 5'-ACTCTAC-3' and promotes auxin homeostasis-regulating gene expression (e.g. YUC genes), as well as genes affecting stamen development, cell expansion and timing of flowering. Synergistically with other SHI-related proteins, regulates gynoecium, stamen and leaf development in a dose-dependent manner, controlling apical-basal patterning. Promotes style and stigma formation, and influence vascular development during gynoecium development. May also have a role in the formation and/or maintenance of the shoot apical meristem (SAM). This chain is Protein SHI RELATED SEQUENCE 8 (SRS8), found in Arabidopsis thaliana (Mouse-ear cress).